Consider the following 377-residue polypeptide: Chaperone protein DnaJ (377 aa).

Residues 4-69 (DYYEALGVTR…QKRAAYDRFG (66 aa)) form the J domain. The CR-type zinc finger occupies 135–213 (GKTAQIRVPT…CHGQGRVTQE (79 aa)). Positions 148, 151, 165, 168, 187, 190, 201, and 204 each coordinate Zn(2+). CXXCXGXG motif repeat units follow at residues 148 to 155 (CDECSGSG), 165 to 172 (CTMCSGSG), 187 to 194 (CPGCNGRG), and 201 to 208 (CEKCHGQG).

It belongs to the DnaJ family. As to quaternary structure, homodimer. The cofactor is Zn(2+).

It is found in the cytoplasm. In terms of biological role, participates actively in the response to hyperosmotic and heat shock by preventing the aggregation of stress-denatured proteins and by disaggregating proteins, also in an autonomous, DnaK-independent fashion. Unfolded proteins bind initially to DnaJ; upon interaction with the DnaJ-bound protein, DnaK hydrolyzes its bound ATP, resulting in the formation of a stable complex. GrpE releases ADP from DnaK; ATP binding to DnaK triggers the release of the substrate protein, thus completing the reaction cycle. Several rounds of ATP-dependent interactions between DnaJ, DnaK and GrpE are required for fully efficient folding. Also involved, together with DnaK and GrpE, in the DNA replication of plasmids through activation of initiation proteins. The sequence is that of Chaperone protein DnaJ from Brucella ovis (strain ATCC 25840 / 63/290 / NCTC 10512).